The following is a 226-amino-acid chain: V-type proton ATPase subunit E (226 aa).

The protein belongs to the V-ATPase E subunit family. As to quaternary structure, V-ATPase is a heteromultimeric enzyme composed of a peripheral catalytic V1 complex (components A to H) attached to an integral membrane V0 proton pore complex (components: a, c, c', c'', d, e, f and VOA1).

The protein resides in the vacuole membrane. In terms of biological role, subunit of the V1 complex of vacuolar(H+)-ATPase (V-ATPase), a multisubunit enzyme composed of a peripheral complex (V1) that hydrolyzes ATP and a membrane integral complex (V0) that translocates protons. V-ATPase is responsible for acidifying and maintaining the pH of intracellular compartments. This chain is V-type proton ATPase subunit E (VMA4), found in Candida albicans (Yeast).